Here is a 688-residue protein sequence, read N- to C-terminus: uncharacterized protein (688 aa).

This is an uncharacterized protein from Saccharomyces cerevisiae (strain ATCC 204508 / S288c) (Baker's yeast).